Here is a 75-residue protein sequence, read N- to C-terminus: Protein SlyX homolog (75 aa).

Belongs to the SlyX family.

This chain is Protein SlyX homolog, found in Vibrio vulnificus (strain CMCP6).